The primary structure comprises 366 residues: Glycerol-3-phosphate dehydrogenase [NAD(+)], glycosomal (366 aa).

NAD(+) is bound by residues 22–27 (GSGAFG), phenylalanine 97, lysine 125, and alanine 157. Residue lysine 125 coordinates substrate. Lysine 210 serves as the catalytic Proton acceptor. NAD(+) contacts are provided by arginine 274, valine 298, and glutamate 300. 274–275 (RN) is a binding site for substrate. The short motif at 364 to 366 (SKL) is the Microbody targeting signal element.

This sequence belongs to the NAD-dependent glycerol-3-phosphate dehydrogenase family. As to quaternary structure, homodimer.

Its subcellular location is the glycosome. The enzyme catalyses sn-glycerol 3-phosphate + NAD(+) = dihydroxyacetone phosphate + NADH + H(+). This Leishmania mexicana protein is Glycerol-3-phosphate dehydrogenase [NAD(+)], glycosomal (GPD).